The chain runs to 386 residues: Chaperone protein DnaJ (386 aa).

Positions 5–69 constitute a J domain; it reads DLYDVLGVKK…QKRAQYDQFG (65 aa). The segment at 140-224 adopts a CR-type zinc-finger fold; that stretch reads GKETSIKYNR…CHGAGVTEER (85 aa). Zn(2+)-binding residues include cysteine 153, cysteine 156, cysteine 170, cysteine 173, cysteine 196, cysteine 199, cysteine 212, and cysteine 215. CXXCXGXG motif repeat units lie at residues 153–160, 170–177, 196–203, and 212–219; these read CHTCHGSG, CSTCHGQG, CPTCGGKG, and CDTCHGAG.

Belongs to the DnaJ family. Homodimer. It depends on Zn(2+) as a cofactor.

The protein resides in the cytoplasm. Participates actively in the response to hyperosmotic and heat shock by preventing the aggregation of stress-denatured proteins and by disaggregating proteins, also in an autonomous, DnaK-independent fashion. Unfolded proteins bind initially to DnaJ; upon interaction with the DnaJ-bound protein, DnaK hydrolyzes its bound ATP, resulting in the formation of a stable complex. GrpE releases ADP from DnaK; ATP binding to DnaK triggers the release of the substrate protein, thus completing the reaction cycle. Several rounds of ATP-dependent interactions between DnaJ, DnaK and GrpE are required for fully efficient folding. Also involved, together with DnaK and GrpE, in the DNA replication of plasmids through activation of initiation proteins. This chain is Chaperone protein DnaJ, found in Limosilactobacillus fermentum (strain NBRC 3956 / LMG 18251) (Lactobacillus fermentum).